A 341-amino-acid chain; its full sequence is Holliday junction branch migration complex subunit RuvB (341 aa).

The large ATPase domain (RuvB-L) stretch occupies residues 1–182 (MKDRLISAVA…FGVISRLEYY (182 aa)). ATP is bound by residues Leu21, Arg22, Gly63, Lys66, Thr67, Thr68, 129-131 (EDY), Arg172, Tyr182, and Arg219. A Mg(2+)-binding site is contributed by Thr67. The small ATPAse domain (RuvB-S) stretch occupies residues 183 to 253 (RPEDLVLIVN…VAVEALKFLE (71 aa)). The tract at residues 256-341 (PLGLDFADRR…REETDQVSLW (86 aa)) is head domain (RuvB-H). The DNA site is built by Arg311 and Arg316.

This sequence belongs to the RuvB family. As to quaternary structure, homohexamer. Forms an RuvA(8)-RuvB(12)-Holliday junction (HJ) complex. HJ DNA is sandwiched between 2 RuvA tetramers; dsDNA enters through RuvA and exits via RuvB. An RuvB hexamer assembles on each DNA strand where it exits the tetramer. Each RuvB hexamer is contacted by two RuvA subunits (via domain III) on 2 adjacent RuvB subunits; this complex drives branch migration. In the full resolvosome a probable DNA-RuvA(4)-RuvB(12)-RuvC(2) complex forms which resolves the HJ.

Its subcellular location is the cytoplasm. The catalysed reaction is ATP + H2O = ADP + phosphate + H(+). In terms of biological role, the RuvA-RuvB-RuvC complex processes Holliday junction (HJ) DNA during genetic recombination and DNA repair, while the RuvA-RuvB complex plays an important role in the rescue of blocked DNA replication forks via replication fork reversal (RFR). RuvA specifically binds to HJ cruciform DNA, conferring on it an open structure. The RuvB hexamer acts as an ATP-dependent pump, pulling dsDNA into and through the RuvAB complex. RuvB forms 2 homohexamers on either side of HJ DNA bound by 1 or 2 RuvA tetramers; 4 subunits per hexamer contact DNA at a time. Coordinated motions by a converter formed by DNA-disengaged RuvB subunits stimulates ATP hydrolysis and nucleotide exchange. Immobilization of the converter enables RuvB to convert the ATP-contained energy into a lever motion, pulling 2 nucleotides of DNA out of the RuvA tetramer per ATP hydrolyzed, thus driving DNA branch migration. The RuvB motors rotate together with the DNA substrate, which together with the progressing nucleotide cycle form the mechanistic basis for DNA recombination by continuous HJ branch migration. Branch migration allows RuvC to scan DNA until it finds its consensus sequence, where it cleaves and resolves cruciform DNA. This is Holliday junction branch migration complex subunit RuvB from Pelotomaculum thermopropionicum (strain DSM 13744 / JCM 10971 / SI).